A 157-amino-acid chain; its full sequence is ATP synthase subunit b (157 aa).

The helical transmembrane segment at 7–29 threads the bilayer; the sequence is LISQAIAFSLFILFTARFVWPYL.

This sequence belongs to the ATPase B chain family. In terms of assembly, F-type ATPases have 2 components, F(1) - the catalytic core - and F(0) - the membrane proton channel. F(1) has five subunits: alpha(3), beta(3), gamma(1), delta(1), epsilon(1). F(0) has three main subunits: a(1), b(2) and c(10-14). The alpha and beta chains form an alternating ring which encloses part of the gamma chain. F(1) is attached to F(0) by a central stalk formed by the gamma and epsilon chains, while a peripheral stalk is formed by the delta and b chains.

Its subcellular location is the cell inner membrane. F(1)F(0) ATP synthase produces ATP from ADP in the presence of a proton or sodium gradient. F-type ATPases consist of two structural domains, F(1) containing the extramembraneous catalytic core and F(0) containing the membrane proton channel, linked together by a central stalk and a peripheral stalk. During catalysis, ATP synthesis in the catalytic domain of F(1) is coupled via a rotary mechanism of the central stalk subunits to proton translocation. Its function is as follows. Component of the F(0) channel, it forms part of the peripheral stalk, linking F(1) to F(0). In Nitrosomonas europaea (strain ATCC 19718 / CIP 103999 / KCTC 2705 / NBRC 14298), this protein is ATP synthase subunit b.